We begin with the raw amino-acid sequence, 367 residues long: Cyclin-D3-2 (367 aa).

Residues 324–335 (STTASVSSSSSS) show a composition bias toward low complexity. The interval 324–347 (STTASVSSSSSSPEPLLKRRRVQE) is disordered.

This sequence belongs to the cyclin family. Cyclin D subfamily. As to quaternary structure, interacts with CDKA-1. As to expression, expressed in developing vegetative and floral primordia.

Promotes divisions in the guard cells (GCs) after the guard mother cells (GMC) symmetric division when in the presence of CDKA-1. The chain is Cyclin-D3-2 (CYCD3-2) from Arabidopsis thaliana (Mouse-ear cress).